Here is a 186-residue protein sequence, read N- to C-terminus: Ribosome-recycling factor (186 aa).

The protein belongs to the RRF family.

The protein localises to the cytoplasm. Responsible for the release of ribosomes from messenger RNA at the termination of protein biosynthesis. May increase the efficiency of translation by recycling ribosomes from one round of translation to another. In Chlorobium phaeobacteroides (strain BS1), this protein is Ribosome-recycling factor.